Reading from the N-terminus, the 376-residue chain is 26S proteasome non-ATPase regulatory subunit 13 (376 aa).

A PCI domain is found at 171–338 (SYYKDALRFL…KRVHMTWVQP (168 aa)).

In terms of assembly, component of the 19S proteasome regulatory particle complex. The 26S proteasome consists of a 20S core particle (CP) and two 19S regulatory subunits (RP). The regulatory particle is made of a lid composed of 9 subunits including PSMD13, a base containing 6 ATPases and few additional components.

Component of the 26S proteasome, a multiprotein complex involved in the ATP-dependent degradation of ubiquitinated proteins. This complex plays a key role in the maintenance of protein homeostasis by removing misfolded or damaged proteins, which could impair cellular functions, and by removing proteins whose functions are no longer required. Therefore, the proteasome participates in numerous cellular processes, including cell cycle progression, apoptosis, or DNA damage repair. The protein is 26S proteasome non-ATPase regulatory subunit 13 of Gallus gallus (Chicken).